Consider the following 501-residue polypeptide: Lysine--tRNA ligase (501 aa).

Residues E411 and E418 each contribute to the Mg(2+) site.

It belongs to the class-II aminoacyl-tRNA synthetase family. As to quaternary structure, homodimer. It depends on Mg(2+) as a cofactor.

The protein localises to the cytoplasm. It catalyses the reaction tRNA(Lys) + L-lysine + ATP = L-lysyl-tRNA(Lys) + AMP + diphosphate. This is Lysine--tRNA ligase from Aliivibrio salmonicida (strain LFI1238) (Vibrio salmonicida (strain LFI1238)).